A 499-amino-acid polypeptide reads, in one-letter code: Glycerol kinase (499 aa).

T17 serves as a coordination point for ADP. The ATP site is built by T17, T18, and S19. Residue T17 participates in sn-glycerol 3-phosphate binding. Residue R21 participates in ADP binding. Residues R87, E88, Y139, and D243 each contribute to the sn-glycerol 3-phosphate site. Residues R87, E88, Y139, D243, and Q244 each coordinate glycerol. ADP is bound by residues T265 and G308. ATP contacts are provided by T265, G308, Q312, and G409. G409 and N413 together coordinate ADP.

This sequence belongs to the FGGY kinase family.

The catalysed reaction is glycerol + ATP = sn-glycerol 3-phosphate + ADP + H(+). Its pathway is polyol metabolism; glycerol degradation via glycerol kinase pathway; sn-glycerol 3-phosphate from glycerol: step 1/1. Inhibited by fructose 1,6-bisphosphate (FBP). Functionally, key enzyme in the regulation of glycerol uptake and metabolism. Catalyzes the phosphorylation of glycerol to yield sn-glycerol 3-phosphate. The polypeptide is Glycerol kinase (Pseudomonas putida (strain ATCC 700007 / DSM 6899 / JCM 31910 / BCRC 17059 / LMG 24140 / F1)).